Consider the following 819-residue polypeptide: Meiotically up-regulated gene 45 protein (819 aa).

The chain crosses the membrane as a helical span at residues 797–817; the sequence is AMCLLTLLIGIYLILQVVFIY.

The protein localises to the membrane. Its function is as follows. Has a role in meiosis. The polypeptide is Meiotically up-regulated gene 45 protein (mug45) (Schizosaccharomyces pombe (strain 972 / ATCC 24843) (Fission yeast)).